The sequence spans 823 residues: Tax1-binding protein 1 homolog B (823 aa).

The stretch at 149–487 forms a coiled coil; the sequence is VTTKASYLEQ…QKQVVKFNEQ (339 aa). 2 disordered regions span residues 342–377 and 486–519; these read HRQL…QQAN and EQQG…STSD. Residues 356-368 show a composition bias toward basic and acidic residues; that stretch reads KALREQLRQKEEQ. Over residues 498 to 518 the composition is skewed to low complexity; that stretch reads AAAGPLSASPEASAPGSPSTS. Positions 548–638 form a coiled coil; sequence QMLNEERERC…NREEEQKDSN (91 aa). Residues 650-746 are disordered; it reads MPYAQDDPSP…EPAAPEPAEF (97 aa). Over residues 723 to 739 the composition is skewed to acidic residues; sequence LEEPEEPQSTQNDDEPA. 2 UBZ1-type zinc fingers span residues 762 to 788 and 789 to 815; these read QKRC…VESH and WKIC…VLTH. 8 residues coordinate Zn(2+): Cys765, Cys768, His784, His788, Cys792, Cys795, His811, and His815.

As to expression, expressed at relatively high levels in both proximal and distal regions of the fin bud during pectoral fin development.

Its function is as follows. May have anti-apoptotic activity. This chain is Tax1-binding protein 1 homolog B (tax1bp1b), found in Danio rerio (Zebrafish).